The sequence spans 414 residues: Coenzyme A biosynthesis bifunctional protein CoaBC (414 aa).

The tract at residues 1–191 (MSARKRIVVG…ALPYDMAGVK (191 aa)) is phosphopantothenoylcysteine decarboxylase. Positions 192–414 (ALVTAGGTRE…IAAFLKSQDG (223 aa)) are phosphopantothenate--cysteine ligase. CTP contacts are provided by residues 275-277 (MAA), Asp-281, Lys-291, 293-294 (KK), 308-311 (DDVL), Phe-332, Lys-350, and Lys-354.

This sequence in the N-terminal section; belongs to the HFCD (homo-oligomeric flavin containing Cys decarboxylase) superfamily. In the C-terminal section; belongs to the PPC synthetase family. Homododecamer. It depends on Mg(2+) as a cofactor. FMN is required as a cofactor.

The catalysed reaction is N-[(R)-4-phosphopantothenoyl]-L-cysteine + H(+) = (R)-4'-phosphopantetheine + CO2. It carries out the reaction (R)-4'-phosphopantothenate + L-cysteine + CTP = N-[(R)-4-phosphopantothenoyl]-L-cysteine + CMP + diphosphate + H(+). It functions in the pathway cofactor biosynthesis; coenzyme A biosynthesis; CoA from (R)-pantothenate: step 2/5. Its pathway is cofactor biosynthesis; coenzyme A biosynthesis; CoA from (R)-pantothenate: step 3/5. Its activity is regulated as follows. Two related chemical scaffolds that potently inhibit the activity of the CoaB moiety of CoaBC through a cryptic allosteric site that sits in the dimer interface region of the CoaB enzyme were identified. Functionally, catalyzes two sequential steps in the biosynthesis of coenzyme A. In the first step cysteine is conjugated to 4'-phosphopantothenate to form 4-phosphopantothenoylcysteine. In the second step the latter compound is decarboxylated to form 4'-phosphopantotheine. This is Coenzyme A biosynthesis bifunctional protein CoaBC from Mycolicibacterium smegmatis (strain ATCC 700084 / mc(2)155) (Mycobacterium smegmatis).